Reading from the N-terminus, the 195-residue chain is Fe/S biogenesis protein NfuA (195 aa).

2 residues coordinate [4Fe-4S] cluster: cysteine 152 and cysteine 155.

Belongs to the NfuA family. In terms of assembly, homodimer. [4Fe-4S] cluster serves as cofactor.

Its function is as follows. Involved in iron-sulfur cluster biogenesis. Binds a 4Fe-4S cluster, can transfer this cluster to apoproteins, and thereby intervenes in the maturation of Fe/S proteins. Could also act as a scaffold/chaperone for damaged Fe/S proteins. This is Fe/S biogenesis protein NfuA from Vibrio cholerae serotype O1 (strain ATCC 39315 / El Tor Inaba N16961).